The sequence spans 209 residues: MERTLWDISPALSTATPTWPGDTPFSQEIAWKLEGDCPVNVGRITLSPHTGAHADAPLHYHADGAPIGAVPLDAYLGPCRVIHCVGVARVEPEHVRDALDGAPPRVLLRTYARMPQNAWDDHFAAVAPETIGLLAAHGVRLIGTDTASLDPQTSKTMDAHHAVGRHGLAILEGLVLDDVPAGDYELIALPLKFATLDASPVRAVLRRLP.

Residue W19 participates in substrate binding. H49, H53, and D55 together coordinate Zn(2+). The active-site Proton donor/acceptor is the H59. H160 and E172 together coordinate Zn(2+).

Belongs to the Cyclase 1 superfamily. KynB family. In terms of assembly, homodimer. Requires Zn(2+) as cofactor.

It carries out the reaction N-formyl-L-kynurenine + H2O = L-kynurenine + formate + H(+). The protein operates within amino-acid degradation; L-tryptophan degradation via kynurenine pathway; L-kynurenine from L-tryptophan: step 2/2. Functionally, catalyzes the hydrolysis of N-formyl-L-kynurenine to L-kynurenine, the second step in the kynurenine pathway of tryptophan degradation. This Ralstonia nicotianae (strain ATCC BAA-1114 / GMI1000) (Ralstonia solanacearum) protein is Kynurenine formamidase.